The following is a 234-amino-acid chain: Proteasome subunit alpha type-2 (234 aa).

Belongs to the peptidase T1A family. The 26S proteasome consists of a 20S proteasome core and two 19S regulatory subunits. The 20S proteasome core is composed of 28 subunits that are arranged in four stacked rings, resulting in a barrel-shaped structure. The two end rings are each formed by seven alpha subunits, and the two central rings are each formed by seven beta subunits. The catalytic chamber with the active sites is on the inside of the barrel. Interacts with Rpn6.

The protein resides in the cytoplasm. The protein localises to the nucleus. Functionally, the proteasome is a multicatalytic proteinase complex which is characterized by its ability to cleave peptides with Arg, Phe, Tyr, Leu, and Glu adjacent to the leaving group at neutral or slightly basic pH. The proteasome has an ATP-dependent proteolytic activity. The polypeptide is Proteasome subunit alpha type-2 (Prosalpha2) (Drosophila melanogaster (Fruit fly)).